We begin with the raw amino-acid sequence, 26 residues long: GIWGTLAKIGIKAVPRVISMLKKKKQ.

Expressed by the venom gland.

The protein localises to the secreted. Its subcellular location is the target cell membrane. Functionally, has a broad spectrum of activity against both Gram-positive and Gram-negative bacteria and S.cerevisiae. Has insecticidal and hemolytic activities. May act by disrupting the integrity of the bacterial cell membrane. This Neoponera goeldii (Ponerine ant) protein is M-poneritoxin-Ng1c.